We begin with the raw amino-acid sequence, 618 residues long: Mitochondrial Rho GTPase 2 (618 aa).

Topologically, residues Met-1–Ser-591 are cytoplasmic. One can recognise a Miro 1 domain in the interval Lys-2–His-168. GTP-binding residues include Gly-16, Lys-17, Thr-18, and Ser-19. Thr-18 serves as a coordination point for Mg(2+). 2 residues coordinate Mg(2+): Pro-35 and Asp-57. 6 residues coordinate GTP: Ser-59, Asn-118, Lys-119, Asp-121, Ala-149, and Lys-150. EF-hand domains lie at Ala-184–Asn-219 and Leu-304–Met-339. Ca(2+) is bound by residues Asp-197, Asp-199, Asn-201, Glu-208, Asp-317, Asp-319, Asp-321, and Glu-328. One can recognise a Miro 2 domain in the interval Arg-416 to Phe-579. Positions 428, 430, 431, 432, and 433 each coordinate GTP. Ser-432 is a binding site for Mg(2+). A Mg(2+)-binding site is contributed by Glu-474. Positions 528, 530, and 559 each coordinate GTP. A helical; Anchor for type IV membrane protein transmembrane segment spans residues Phe-592–Leu-614. The Mitochondrial intermembrane portion of the chain corresponds to Ala-615 to Lys-618.

The protein belongs to the mitochondrial Rho GTPase family. As to quaternary structure, homodimer.

Its subcellular location is the mitochondrion outer membrane. It carries out the reaction GTP + H2O = GDP + phosphate + H(+). The enzyme catalyses ATP + H2O = ADP + phosphate + H(+). It catalyses the reaction UTP + H2O = UDP + phosphate + H(+). Functionally, atypical mitochondrial nucleoside-triphosphatase (NTPase) involved in mitochondrial trafficking. Probably involved in control of anterograde transport of mitochondria and their subcellular distribution. Can hydrolyze GTP, ATP and UTP. The protein is Mitochondrial Rho GTPase 2 (RHOT2) of Gallus gallus (Chicken).